The following is a 165-amino-acid chain: 6,7-dimethyl-8-ribityllumazine synthase (165 aa).

5-amino-6-(D-ribitylamino)uracil contacts are provided by residues Tyr30, 61-63 (ALE), and 90-92 (VVI). 95 to 96 (ET) provides a ligand contact to (2S)-2-hydroxy-3-oxobutyl phosphate. Residue His98 is the Proton donor of the active site. Residue Asn123 coordinates 5-amino-6-(D-ribitylamino)uracil. Arg137 contacts (2S)-2-hydroxy-3-oxobutyl phosphate.

Belongs to the DMRL synthase family.

The catalysed reaction is (2S)-2-hydroxy-3-oxobutyl phosphate + 5-amino-6-(D-ribitylamino)uracil = 6,7-dimethyl-8-(1-D-ribityl)lumazine + phosphate + 2 H2O + H(+). Its pathway is cofactor biosynthesis; riboflavin biosynthesis; riboflavin from 2-hydroxy-3-oxobutyl phosphate and 5-amino-6-(D-ribitylamino)uracil: step 1/2. Functionally, catalyzes the formation of 6,7-dimethyl-8-ribityllumazine by condensation of 5-amino-6-(D-ribitylamino)uracil with 3,4-dihydroxy-2-butanone 4-phosphate. This is the penultimate step in the biosynthesis of riboflavin. The chain is 6,7-dimethyl-8-ribityllumazine synthase from Xanthobacter autotrophicus (strain ATCC BAA-1158 / Py2).